A 1198-amino-acid polypeptide reads, in one-letter code: DNA polymerase (1198 aa).

Disordered stretches follow at residues 1 to 90 (MALV…TVVA), 179 to 198 (LEQPDGQGQAAEVEDHQPNP), and 906 to 931 (ALADSDAEESEDERAPTPFYSPPSGT). The segment covering 30-40 (QQPPRAAPAPA) has biased composition (low complexity).

This sequence belongs to the DNA polymerase type-B family. As to quaternary structure, heterodimer with the terminal protein; this heterodimer binds to bp 9 to 18 of the genome. Forms a complex with viral pTP, DBP and hosts NFIA and POU2F1/OCT1 for initiation of replication.

The protein localises to the host nucleus. It catalyses the reaction DNA(n) + a 2'-deoxyribonucleoside 5'-triphosphate = DNA(n+1) + diphosphate. Eukaryotic-type DNA polymerase involved in viral genomic replication. DNA synthesis is protein primed, and acts in a strand displacement replication. Assembles in complex with viral pTP, DBP, host NFIA and host POU2F1/OCT1 on viral origin of replication. The polymerase covalently transfers dCMP onto pTP, thereby initiating complementary strand synthesis. In Homo sapiens (Human), this protein is DNA polymerase.